The chain runs to 289 residues: NAC domain-containing protein 2 (289 aa).

Residues 7–158 (LPPGFRFHPT…DWVLCRIYNK (152 aa)) enclose the NAC domain.

As to quaternary structure, interacts with KIN10 and KIN11.

The protein localises to the nucleus. The protein is NAC domain-containing protein 2 (NAC002) of Arabidopsis thaliana (Mouse-ear cress).